A 576-amino-acid polypeptide reads, in one-letter code: Zinc finger protein 791 (576 aa).

In terms of domain architecture, KRAB spans 4 to 90 (VAFEDVSVSF…AENFSPNLSV (87 aa)). 17 consecutive C2H2-type zinc fingers follow at residues 100–122 (YECT…MRSH), 132–154 (YKCK…ERSH), 160–182 (YKCK…ERTH), 188–210 (YECK…ERIH), 216–238 (YECK…ERTH), 244–266 (YACK…MITH), 272–294 (YKCK…ERIH), 300–322 (YKCK…ERIH), 328–350 (YKCK…VRVH), 356–378 (YKCK…ERTH), 384–406 (YECK…KRNH), 412–434 (YECK…MITH), 440–462 (YKCR…ERTH), 468–490 (YECK…KRTH), 496–518 (YECK…MRMH), 524–546 (YKCK…TRIH), and 552–574 (LECK…MRMH).

It belongs to the krueppel C2H2-type zinc-finger protein family.

The protein localises to the nucleus. Its function is as follows. May be involved in transcriptional regulation. The sequence is that of Zinc finger protein 791 (ZNF791) from Homo sapiens (Human).